Here is a 291-residue protein sequence, read N- to C-terminus: Light-independent protochlorophyllide reductase iron-sulfur ATP-binding protein (291 aa).

ATP is bound by residues 10 to 15 and lysine 39; that span reads GIGKST. Residue serine 14 participates in Mg(2+) binding. [4Fe-4S] cluster is bound by residues cysteine 95 and cysteine 129. 180-181 serves as a coordination point for ATP; sequence NR.

The protein belongs to the NifH/BchL/ChlL family. Homodimer. Protochlorophyllide reductase is composed of three subunits; ChlL, ChlN and ChlB. The cofactor is [4Fe-4S] cluster.

Its subcellular location is the plastid. It localises to the chloroplast. The enzyme catalyses chlorophyllide a + oxidized 2[4Fe-4S]-[ferredoxin] + 2 ADP + 2 phosphate = protochlorophyllide a + reduced 2[4Fe-4S]-[ferredoxin] + 2 ATP + 2 H2O. It functions in the pathway porphyrin-containing compound metabolism; chlorophyll biosynthesis (light-independent). Its function is as follows. Component of the dark-operative protochlorophyllide reductase (DPOR) that uses Mg-ATP and reduced ferredoxin to reduce ring D of protochlorophyllide (Pchlide) to form chlorophyllide a (Chlide). This reaction is light-independent. The L component serves as a unique electron donor to the NB-component of the complex, and binds Mg-ATP. This Pinus contorta (Shore pine) protein is Light-independent protochlorophyllide reductase iron-sulfur ATP-binding protein.